The chain runs to 222 residues: C-8 sterol isomerase ERG2 (222 aa).

Residues 3-23 (FFPLLLLIGVVGYIMNVLFTT) traverse the membrane as a helical segment.

It belongs to the ERG2 family.

It localises to the endoplasmic reticulum membrane. The catalysed reaction is fecosterol = episterol. It participates in steroid metabolism; ergosterol biosynthesis; ergosterol from zymosterol: step 2/5. Catalytic activity is inhibited by the morphilines tridemorph, fenpropimorph, and fenpropidin. In terms of biological role, C-8 sterol isomerase; part of the third module of ergosterol biosynthesis pathway that includes the late steps of the pathway. ERG2 catalyzes the reaction which results in unsaturation at C-7 in the B ring of sterols and thus converts fecosterol to episterol. The third module or late pathway involves the ergosterol synthesis itself through consecutive reactions that mainly occur in the endoplasmic reticulum (ER) membrane. Firstly, the squalene synthase ERG9 catalyzes the condensation of 2 farnesyl pyrophosphate moieties to form squalene, which is the precursor of all steroids. Squalene synthase is crucial for balancing the incorporation of farnesyl diphosphate (FPP) into sterol and nonsterol isoprene synthesis. Secondly, the squalene epoxidase ERG1 catalyzes the stereospecific oxidation of squalene to (S)-2,3-epoxysqualene, which is considered to be a rate-limiting enzyme in steroid biosynthesis. Then, the lanosterol synthase ERG7 catalyzes the cyclization of (S)-2,3 oxidosqualene to lanosterol, a reaction that forms the sterol core. In the next steps, lanosterol is transformed to zymosterol through a complex process involving various demethylation, reduction and desaturation reactions. The lanosterol 14-alpha-demethylase ERG11 (also known as CYP51) catalyzes C14-demethylation of lanosterol to produce 4,4'-dimethyl cholesta-8,14,24-triene-3-beta-ol, which is critical for ergosterol biosynthesis. The C-14 reductase ERG24 reduces the C14=C15 double bond of 4,4-dimethyl-cholesta-8,14,24-trienol to produce 4,4-dimethyl-cholesta-8,24-dienol. 4,4-dimethyl-cholesta-8,24-dienol is substrate of the C-4 demethylation complex ERG25-ERG26-ERG27 in which ERG25 catalyzes the three-step monooxygenation required for the demethylation of 4,4-dimethyl and 4alpha-methylsterols, ERG26 catalyzes the oxidative decarboxylation that results in a reduction of the 3-beta-hydroxy group at the C-3 carbon to an oxo group, and ERG27 is responsible for the reduction of the keto group on the C-3. ERG28 has a role as a scaffold to help anchor ERG25, ERG26 and ERG27 to the endoplasmic reticulum and ERG29 regulates the activity of the iron-containing C4-methylsterol oxidase ERG25. Then, the sterol 24-C-methyltransferase ERG6 catalyzes the methyl transfer from S-adenosyl-methionine to the C-24 of zymosterol to form fecosterol. The C-8 sterol isomerase ERG2 catalyzes the reaction which results in unsaturation at C-7 in the B ring of sterols and thus converts fecosterol to episterol. The sterol-C5-desaturase ERG3 then catalyzes the introduction of a C-5 double bond in the B ring to produce 5-dehydroepisterol. The C-22 sterol desaturase ERG5 further converts 5-dehydroepisterol into ergosta-5,7,22,24(28)-tetraen-3beta-ol by forming the C-22(23) double bond in the sterol side chain. Finally, ergosta-5,7,22,24(28)-tetraen-3beta-ol is substrate of the C-24(28) sterol reductase ERG4 to produce ergosterol. The polypeptide is C-8 sterol isomerase ERG2 (Saccharomyces cerevisiae (strain ATCC 204508 / S288c) (Baker's yeast)).